Here is a 415-residue protein sequence, read N- to C-terminus: Squalene synthase 12 (415 aa).

Helical transmembrane passes span 281-301 (AIFR…ALCF) and 391-411 (LIAI…SNLL).

Belongs to the phytoene/squalene synthase family. It depends on Mg(2+) as a cofactor. Mn(2+) serves as cofactor.

Its subcellular location is the endoplasmic reticulum membrane. It carries out the reaction 2 (2E,6E)-farnesyl diphosphate + NADH + H(+) = squalene + 2 diphosphate + NAD(+). It catalyses the reaction 2 (2E,6E)-farnesyl diphosphate + NADPH + H(+) = squalene + 2 diphosphate + NADP(+). The protein operates within terpene metabolism; lanosterol biosynthesis; lanosterol from farnesyl diphosphate: step 1/3. In terms of biological role, component of the triterpene saponins (e.g. ginsenosides or panaxosides) and phytosterols biosynthetic pathways. Catalyzes the biosynthesis of squalene. This Panax ginseng (Korean ginseng) protein is Squalene synthase 12.